A 190-amino-acid chain; its full sequence is Class III hydrophobin F (190 aa).

Positions 1–18 (MRPITILCTLATLSTTLA) are cleaved as a signal peptide. Disulfide bonds link cysteine 54–cysteine 115, cysteine 62–cysteine 109, cysteine 63–cysteine 97, and cysteine 116–cysteine 131.

It belongs to the fungal hydrophobin family. Self-assembles to form functional amyloid fibrils called rodlets. Self-assembly into fibrillar rodlets occurs spontaneously at hydrophobic:hydrophilic interfaces and the rodlets further associate laterally to form amphipathic monolayers.

The protein resides in the secreted. It is found in the cell wall. Functionally, aerial growth, conidiation, and dispersal of filamentous fungi in the environment rely upon a capability of their secreting small amphipathic proteins called hydrophobins (HPBs) with low sequence identity. Class I can self-assemble into an outermost layer of rodlet bundles on aerial cell surfaces, conferring cellular hydrophobicity that supports fungal growth, development and dispersal; whereas Class II form highly ordered films at water-air interfaces through intermolecular interactions but contribute nothing to the rodlet structure. RodF and rodG belong to Class III, which contains hydrophobins with intermediate (between classes I and II) or atypical characteristics. RodF, unlike rodA, is not required for rodlet formation. The chain is Class III hydrophobin F from Aspergillus fumigatus (strain ATCC MYA-4609 / CBS 101355 / FGSC A1100 / Af293) (Neosartorya fumigata).